The following is a 135-amino-acid chain: Large ribosomal subunit protein uL16c (135 aa).

Residues 1-20 form a disordered region; sequence MLSPKRTRFRKQHRGRMKGK.

This sequence belongs to the universal ribosomal protein uL16 family. Part of the 50S ribosomal subunit.

The protein resides in the plastid. It is found in the chloroplast. In Landoltia punctata (Dotted duckmeat), this protein is Large ribosomal subunit protein uL16c.